A 221-amino-acid polypeptide reads, in one-letter code: MEKKSCMILALDVSDREEALKIAEDVSEFVDAIKVGYPLILATGLGIIRELAEFAPIIADFKVADIPNTNRLICEHVFEAGTDAVIVQGFTGRDSLDACIEIASEYGKDVFVVSEMSHPGGAEFLQPVGEAIARMAAEAGAFGLVAPATRPERVTTIRKIIGNKLTIISPGVGAQGGKASDVIAAGADWVIVGRAIYKAESPREAARKIAAEIEAEFEQEN.

Residues aspartate 12, lysine 34, 60 to 69 (DFKVADIPNT), serine 117, 170 to 180 (PGVGAQGGKAS), glycine 193, and arginine 194 each bind substrate. Lysine 62 (proton donor) is an active-site residue.

Belongs to the OMP decarboxylase family. Type 1 subfamily. As to quaternary structure, homodimer.

The enzyme catalyses orotidine 5'-phosphate + H(+) = UMP + CO2. It functions in the pathway pyrimidine metabolism; UMP biosynthesis via de novo pathway; UMP from orotate: step 2/2. In terms of biological role, catalyzes the decarboxylation of orotidine 5'-monophosphate (OMP) to uridine 5'-monophosphate (UMP). In Methanosarcina barkeri (strain Fusaro / DSM 804), this protein is Orotidine 5'-phosphate decarboxylase.